The following is a 1045-amino-acid chain: MKCSYTVVFLLFYLLIASFHVDALSWAAWSPWSSCTKTCGGGVSRQLRRCLTSKCSGESVRFKVCAQKTCESKSRLARDTICGGEEIVSRGQCEVVCRSRLTGANFLWRVDDGTPCQAATSRAVCSKGSCQIVGCDGLISSSFRFDACGVCGGRGDTCDNGKFIWKVSEEYTACASNCDDIVDWSGAGRSIASTSQPIVVCVNAITGRVVPEKLCADKLRPKVEARPCPMLICPSRCRWMAADWTECVPHCGEGTRKREVYCVQTAHNVTVHVPDTFCENGTRPAAEENCVSTSCGRWEAGKWSKCTASCGQGVRRRHVACVGGSDCDEGGRPRQETTCYAGIPCSIATNSLDWNDRAYLDGNTFGSMDNHNDWQAPRLVAGEWSTCSSTCGTGVMSRTVECVAVNPISSAPIKLPMSECQDQEQPKLFESCEVRSCPLQEDSKLSEDEAPYQWRYGDWTQCSASCLGGKQKAALKCIQVSTGKSVQWSQCDARRRPPEKSRPCNQHPCPPFWLTSKYSDCSMSCGSGTARRSVKCAQTVSKTDGADAHIVLRDDRCHFKKPQETETCNVVACPATWVTAQWTECSRSCDSGERRRQVWCEIRDSRGKTQRRPDVECDANTKPQTVEVCSFGSCSRPELLSNRVFEQNAEQKKLTLGIGGVATLYQGTSIKIKCPAKKFDKKKIYWKKNGKKIKNDAHIKVSANGNLRVFHARMEDAGVYECFTDRLQGNVTLNFKYRDFPASRVDLAPKPQIPSTKNRQRVQVSKEDVLREQASVLHKMNVSLIEALLTAPNDEKAREQLRKYGNELVARWDIGHWSECRQKTCHVAGYQARGISCKVTFHGEIRNVDNSICESLASVRPPETRPCHREDCPRWEASQWSECSSQRCVSSMLAQKRRNVTCRFTNGTSVDIQHCDITNRPATTMDCPNQNCKAEWRTSDWGSCSSECGTGGVQLRLLSCVWISSGRPAGRNCEQMRRPHSARACVADEPLPPCMPTASALYQRDASCQDQSRFCDIIKLFHSCDSLEVRQKCCSTCTFVERKKF.

Positions 1 to 23 are cleaved as a signal peptide; it reads MKCSYTVVFLLFYLLIASFHVDA. 5 TSP type-1 domains span residues 24 to 71, 236 to 292, 294 to 510, 512 to 572, and 576 to 635; these read LSWA…KTCE, RCRW…NCVS, SCGR…HPCP, FWLT…NVVA, and TWVT…GSCS. Cystine bridges form between Cys-35/Cys-65, Cys-39/Cys-70, and Cys-50/Cys-55. 2 N-linked (GlcNAc...) asparagine glycosylation sites follow: Asn-268 and Asn-280. The region spanning 637-732 is the Ig-like C2-type domain; it reads PELLSNRVFE…FTDRLQGNVT (96 aa). A disulfide bridge connects residues Cys-674 and Cys-722. 2 N-linked (GlcNAc...) asparagine glycosylation sites follow: Asn-730 and Asn-781. The TSP type-1 6 domain maps to 811–873; the sequence is RWDIGHWSEC…TRPCHREDCP (63 aa). Asn-899 and Asn-906 each carry an N-linked (GlcNAc...) asparagine glycan. A TSP type-1 7 domain is found at 932–990; sequence CKAEWRTSDWGSCSSECGTGGVQLRLLSCVWISSGRPAGRNCEQMRRPHSARACVADEP. The 38-residue stretch at 1004 to 1041 folds into the PLAC domain; that stretch reads RDASCQDQSRFCDIIKLFHSCDSLEVRQKCCSTCTFVE.

In terms of assembly, interacts with eva-1 (via the SUEL-type lectin domain). Interacts with unc-5. Interacts with unc-40; the interaction is required for the localization of unc-40 to postsynaptic domains. Isoform a forms homodimers and heterodimers with isoform b. Isoform b forms homodimers and heterodimers with isoform a. Isoform b interacts with nlg-1 (via extracellular domain); the interaction is required for nlg-1 localization to postsynaptic domains. Isoform b interacts (via the Ig-like C2-type domain) with nrx-1 (via C-terminus). Isoform a: Expressed in the commissural GABAergic and cholinergic motor neurons in the first larval stage but only in the cholinergic motor neurons in later larval stages and in adult animals. At the L1 larval stage, mainly localized at the nerve ring and at the dorsal cord. Isoform b: Expressed in the commissural GABAergic and cholinergic motor neurons whose cell bodies reside in the ventral nerve cord and which extend axons into the ventral and dorsal nerve cord. Also expressed in the head neurons RIA, RIC, lateral IL1s, lateral IL2s, OLLs, RMEs and SABs, all of which extend axons into the nerve ring. Expressed in the embryogenic blast cells and the corresponding terminally differentiated ventral cord motor neurons and head neurons.

The protein localises to the cell projection. It localises to the axon. Its subcellular location is the secreted. It is found in the synapse. The protein resides in the extracellular space. The protein localises to the extracellular matrix. Component of an extracellular matrix cue that is involved in the guidance of dorsoventral midline migrations and in the specification of postsynaptic domains at neuromuscular junctions (NMJs). Acts as a ligand for the netrin receptor unc-40 and the neuroligin receptor nlg-1. Secreted by the dorsal and ventral nerve cords to attract sensory axons and muscle membrane extensions called muscle arms. In parallel with unc-6 and slt-1, involved in the netrin receptor unc-40 dependent guidance of the AVM and PVM mechanosensory axons along the dorsal-ventral axis. The unc-40 coreceptor eva-1 is enhancing the responsiveness of unc-40 to the madd-4 guidance cue to attract the muscle arm extensions and AVM mechanosensory axons towards the dorsoventral midline. Acts as a synaptic organizer and is required for the specification of inhibitory GABAergic and excitatory cholinergic identities of postsynaptic domains at neuromuscular junctions (NMJs). Required for the recruitment of unc-40 to both cholinergic and GABAergic NMJs. Promotes the clustering of ACh receptors and GABA(A) receptors at postsynaptic sites during synaptogenesis. The binding to the presynaptic adhesion protein nrx-1 and to the neuroligin nlg-1 at postsynaptic sites promotes clustering of GABAergic receptors at postsynaptic NMJs, thereby contributing to normal GABAergic synaptic transmission. Functionally, isoform a and isoform c: Promotes the clustering of acetylcholine receptors (AChR) at excitatory cholinergic synapses of NMJs via the netrin receptor unc-40. Its function is as follows. Acts as a guidance cue in the attraction of muscle membrane extensions (muscle arms) to the dorsal cord and in cooperation with unc-6 to the ventral cord via the netrin receptor unc-40 and via the unc-40 coreceptor eva-1. Together with nrx-1, clusters netrin receptor unc-40 and neuroligin nlg-1 at postsynaptic sites of GABAergic NMJs, thereby promoting the recruitment of GABA(A) receptors at GABAergic synapses. Prevents the recruitment of GABAergic receptors to cholinergic synapses. The chain is Protein madd-4 from Caenorhabditis elegans.